The sequence spans 506 residues: Pentatricopeptide repeat-containing protein At5g18475 (506 aa).

Positions 28 to 48 (SEKKKKPSPPPESSISPVETN) are disordered. PPR repeat units lie at residues 88–122 (NNATYSVLLDNLVRHKKFLAVDAILHQMKYETCRF), 123–158 (QESLFLNLMRHFSRSDLHDKVMEMFNLIQVIARVKP), 159–194 (SLNAISTCLNLLIDSGEVNLSRKLLLYAKHNLGLQP), 195–229 (NTCIFNILVKHHCKNGDINFAFLVVEEMKRSGISY), 231–266 (NSITYSTLMDCLFAHSRSKEAVELFEDMISKEGISP), 267–301 (DPVTFNVMINGFCRAGEVERAKKILDFMKKNGCNP), 302–336 (NVYNYSALMNGFCKVGKIQEAKQTFDEVKKTGLKL), 337–371 (DTVGYTTLMNCFCRNGETDEAMKLLGEMKASRCRA), 372–406 (DTLTYNVILRGLSSEGRSEEALQMLDQWGSEGVHL), 407–441 (NKGSYRIILNALCCNGELEKAVKFLSVMSERGIWP), 442–476 (HHATWNELVVRLCESGYTEIGVRVLIGFLRIGLIP), and 477–506 (GPKSWGAVVESICKERKLVHVFELLDSLVS).

Belongs to the PPR family. P subfamily.

This chain is Pentatricopeptide repeat-containing protein At5g18475, found in Arabidopsis thaliana (Mouse-ear cress).